The sequence spans 104 residues: uncharacterized protein (104 aa).

This is an uncharacterized protein from Mycoplasma pneumoniae (strain ATCC 29342 / M129 / Subtype 1) (Mycoplasmoides pneumoniae).